The following is a 153-amino-acid chain: Protein E6 (153 aa).

2 zinc fingers span residues 29-65 and 102-138; these read CVYCKRPLSDADVLAFAVKELFVVWRKGFPYGACEKC and CYICHKPLCWEEKEALLVGNKRFHKISGQWTGHCMNC.

Belongs to the papillomaviridae E6 protein family. In terms of assembly, forms homodimers. Interacts with ubiquitin-protein ligase UBE3A/E6-AP; this interaction stimulates UBE3A ubiquitin activity. Interacts with host TP53 and EP300; this interaction inhibits TP53 activity.

The protein resides in the host cytoplasm. It is found in the host nucleus. Its function is as follows. Plays a major role in the induction and maintenance of cellular transformation. E6 associates with host UBE3A/E6-AP ubiquitin-protein ligase and modulates its activity. Sequesters tumor suppressor TP53 in the host cytoplasm and modulates its activity by interacting with host EP300 that results in the reduction of TP53 acetylation and activation. In turn, apoptosis induced by DNA damage is inhibited. E6 also protects host keratinocytes from apoptosis by mediating the degradation of host BAK1. May also inhibit host immune response. This chain is Protein E6, found in Homo sapiens (Human).